Consider the following 257-residue polypeptide: 5'-nucleotidase SurE (257 aa).

Positions 8, 9, 39, and 87 each coordinate a divalent metal cation. The tract at residues 234–257 (VSPLTAPHPTTGHEGLAGLAEKYQ) is disordered.

The protein belongs to the SurE nucleotidase family. A divalent metal cation is required as a cofactor.

Its subcellular location is the cytoplasm. It carries out the reaction a ribonucleoside 5'-phosphate + H2O = a ribonucleoside + phosphate. Nucleotidase that shows phosphatase activity on nucleoside 5'-monophosphates. The chain is 5'-nucleotidase SurE from Natronomonas pharaonis (strain ATCC 35678 / DSM 2160 / CIP 103997 / JCM 8858 / NBRC 14720 / NCIMB 2260 / Gabara) (Halobacterium pharaonis).